The sequence spans 494 residues: Aspartyl/glutamyl-tRNA(Asn/Gln) amidotransferase subunit B (494 aa).

It belongs to the GatB/GatE family. GatB subfamily. Heterotrimer of A, B and C subunits.

It carries out the reaction L-glutamyl-tRNA(Gln) + L-glutamine + ATP + H2O = L-glutaminyl-tRNA(Gln) + L-glutamate + ADP + phosphate + H(+). It catalyses the reaction L-aspartyl-tRNA(Asn) + L-glutamine + ATP + H2O = L-asparaginyl-tRNA(Asn) + L-glutamate + ADP + phosphate + 2 H(+). In terms of biological role, allows the formation of correctly charged Asn-tRNA(Asn) or Gln-tRNA(Gln) through the transamidation of misacylated Asp-tRNA(Asn) or Glu-tRNA(Gln) in organisms which lack either or both of asparaginyl-tRNA or glutaminyl-tRNA synthetases. The reaction takes place in the presence of glutamine and ATP through an activated phospho-Asp-tRNA(Asn) or phospho-Glu-tRNA(Gln). In Rhodopseudomonas palustris (strain BisB18), this protein is Aspartyl/glutamyl-tRNA(Asn/Gln) amidotransferase subunit B.